Consider the following 193-residue polypeptide: Dephospho-CoA kinase (193 aa).

The DPCK domain maps to 5–193 (IIGLTGGIAS…KKVERFCETI (189 aa)). 13–18 (ASGKST) serves as a coordination point for ATP.

The protein belongs to the CoaE family.

Its subcellular location is the cytoplasm. The catalysed reaction is 3'-dephospho-CoA + ATP = ADP + CoA + H(+). It functions in the pathway cofactor biosynthesis; coenzyme A biosynthesis; CoA from (R)-pantothenate: step 5/5. In terms of biological role, catalyzes the phosphorylation of the 3'-hydroxyl group of dephosphocoenzyme A to form coenzyme A. The polypeptide is Dephospho-CoA kinase (Fusobacterium nucleatum subsp. nucleatum (strain ATCC 25586 / DSM 15643 / BCRC 10681 / CIP 101130 / JCM 8532 / KCTC 2640 / LMG 13131 / VPI 4355)).